The sequence spans 111 residues: Putative ciliary rootlet coiled-coil protein-like 1 protein (111 aa).

The stretch at 21 to 86 forms a coiled coil; that stretch reads MELELSVTKL…RQAEQEATVA (66 aa).

It belongs to the rootletin family.

The chain is Putative ciliary rootlet coiled-coil protein-like 1 protein (CROCCP2) from Homo sapiens (Human).